A 382-amino-acid chain; its full sequence is 3-phytase (382 aa).

The first 26 residues, Met1–Ala26, serve as a signal peptide directing secretion. Residues His27–Leu361 form the BPP domain.

Its subcellular location is the secreted. It catalyses the reaction 1D-myo-inositol hexakisphosphate + H2O = 1D-myo-inositol 1,2,4,5,6-pentakisphosphate + phosphate. The polypeptide is 3-phytase (phy) (Bacillus subtilis (strain 168)).